A 535-amino-acid chain; its full sequence is Portal protein (535 aa).

Belongs to the podoviridae portal protein family. In terms of assembly, homododecamer. Interacts with major capsid protein. Interacts with the tail tube proteins gp11 and gp12. Interacts with the terminase large subunit. Interacts with the internal virion protein gp14.

The protein resides in the virion. Its function is as follows. Forms the portal vertex of the capsid. This portal plays critical roles in head assembly, genome packaging, neck/tail attachment, and genome ejection. The portal protein multimerizes as a single ring-shaped homododecamer arranged around a central channel. In Enterobacteria phage T3 (Bacteriophage T3), this protein is Portal protein (8).